The chain runs to 431 residues: Dihydroorotase (431 aa).

The Zn(2+) site is built by His-59 and His-61. Residues 61–63 and Asn-93 each bind substrate; that span reads HLR. Zn(2+) contacts are provided by Asp-151, His-178, His-231, and Asp-304. The active site involves Asp-304. Residues His-308 and 322-323 each bind substrate; that span reads FG.

Belongs to the metallo-dependent hydrolases superfamily. DHOase family. Class I DHOase subfamily. The cofactor is Zn(2+).

It catalyses the reaction (S)-dihydroorotate + H2O = N-carbamoyl-L-aspartate + H(+). It functions in the pathway pyrimidine metabolism; UMP biosynthesis via de novo pathway; (S)-dihydroorotate from bicarbonate: step 3/3. Functionally, catalyzes the reversible cyclization of carbamoyl aspartate to dihydroorotate. The polypeptide is Dihydroorotase (Thermoanaerobacter sp. (strain X514)).